The sequence spans 346 residues: KH domain-containing, RNA-binding, signal transduction-associated protein 2 (346 aa).

In terms of domain architecture, KH spans 65–131; that stretch reads LIPVQQYPKF…AKYAHLSNDL (67 aa). The interval 175–291 is disordered; sequence LSYLNGSDDP…SYESYDDNYS (117 aa). The span at 195–224 shows a compositional bias: low complexity; the sequence is LRLTSTASPRGRGSAAPPAPPGRGAAAPRG. A compositionally biased stretch (acidic residues) spans 268-287; the sequence is YGYDDGYDGEYDDQSYESYD.

Belongs to the KHDRBS family.

The protein resides in the nucleus. Functionally, RNA-binding protein that plays a role in the regulation of alternative splicing. The protein is KH domain-containing, RNA-binding, signal transduction-associated protein 2 (khdrbs2) of Danio rerio (Zebrafish).